The following is a 351-amino-acid chain: Transmembrane protein 115 (351 aa).

Topologically, residues 1–19 (MQRALPGARQHLGAILSSA) are cytoplasmic. Residues 1 to 205 (MQRALPGARQ…FGLISSWVYL (205 aa)) are mediates homooligomerization. The helical transmembrane segment at 20–40 (SVVVKALCAAVLFLYLLSFAV) threads the bilayer. The Lumenal portion of the chain corresponds to 41-97 (DTGCLAVTPGYLFPPNFWIWTLATHGLMEQHVWDVAISLATVVVAGRLLEPLWGALE). Residues 98 to 118 (LLIFFSVVNVSVGLLGAFAYL) form a helical membrane-spanning segment. Topologically, residues 119–126 (LTYMASFN) are cytoplasmic. The helical transmembrane segment at 127 to 147 (LVYLFTVRIHGALGFLGGVLV) threads the bilayer. Residues 148-165 (ALKQTMGDCVVLRVPQVR) lie on the Lumenal side of the membrane. Residues 166 to 186 (VSVVPMLLLGLLLLLRLATLL) traverse the membrane as a helical segment. Residues 187–351 (QSPALASYGF…ITFEAAPPTL (165 aa)) lie on the Cytoplasmic side of the membrane. Residues 206 to 229 (RFYQRHSRGRGDMADHFAFATFFP) form a mediates localization to the Golgi region. The tract at residues 300–351 (DQSVWPSMDDDEEEAGAKVDSPMPSDKAPTLPGKGAVPESSLITFEAAPPTL) is disordered. Position 329 is a phosphothreonine (T329).

Belongs to the TMEM115 family. As to quaternary structure, homooligomer. Interacts with COPB1. May interact with LMAN1. Interacts with the COG complex; probably through COG3.

Its subcellular location is the golgi apparatus. It localises to the golgi stack membrane. Functionally, may play a role in retrograde transport of proteins from the Golgi to the endoplasmic reticulum. May indirectly play a role in protein glycosylation in the Golgi. In Bos taurus (Bovine), this protein is Transmembrane protein 115.